A 133-amino-acid chain; its full sequence is Complexin-1 (133 aa).

Disordered regions lie at residues 1–40 (MDFV…RLEA) and 85–112 (AMEA…DEEE). Basic and acidic residues predominate over residues 15 to 40 (DMGKMLGGDEEKDPDAEKKEEERLEA). Positions 28–60 (PDAEKKEEERLEALRQAEEERAGKYAKMEAERE) form a coiled coil.

This sequence belongs to the complexin/synaphin family. In terms of assembly, binds to the SNARE core complex containing SNAP25, VAMP2 and syntaxin-1. As to expression, nervous system. Present in electric organ (at protein level).

The protein resides in the cytoplasm. Its subcellular location is the cytosol. Positively regulates a late step in synaptic vesicle exocytosis. This chain is Complexin-1, found in Narke japonica (Japanese sleeper ray).